The sequence spans 132 residues: Fatty acid-binding protein 12 (132 aa).

Residues R107 and 127–129 (RTY) each bind a fatty acid.

It belongs to the calycin superfamily. Fatty-acid binding protein (FABP) family. As to expression, highly expressed in adult retina and testis with lower levels in cerebral cortex, kidney and epididymis. In the retina, strongly expressed in the ganglion cell layer and throughout the inner nuclear layer in amacrine and bipolar cells. Not expressed in the outer nuclear layer. In the testis, detected in the seminiferous tubules.

Functionally, may play a role in lipid transport. The polypeptide is Fatty acid-binding protein 12 (Rattus norvegicus (Rat)).